Here is a 402-residue protein sequence, read N- to C-terminus: Bacillibactin exporter (402 aa).

A run of 11 helical transmembrane segments spans residues 4–24, 39–59, 69–89, 104–124, 162–182, 212–232, 247–267, 278–298, 302–322, 342–362, and 368–388; these read IIAL…LIPV, VSLI…IAGY, ILLP…FAST, LQGI…GDLF, FVPF…VLFL, WLYT…GVLF, VAKG…SFIA, MKFC…ALWW, FYFL…ALPA, FYNS…AALM, and IIFI…LFTV.

It belongs to the major facilitator superfamily.

It is found in the cell membrane. Functionally, involved in secretion of bacillibactin. This is Bacillibactin exporter (ymfD) from Bacillus subtilis (strain 168).